The following is a 457-amino-acid chain: Methylenetetrahydrofolate--tRNA-(uracil-5-)-methyltransferase TrmFO (457 aa).

7 to 12 (GAGLAG) is an FAD binding site. The disordered stretch occupies residues 38 to 58 (FTSRQDEKTGTHDVRNATQTR). Residues 40–52 (SRQDEKTGTHDVR) show a composition bias toward basic and acidic residues.

It belongs to the MnmG family. TrmFO subfamily. FAD serves as cofactor.

It is found in the cytoplasm. The catalysed reaction is uridine(54) in tRNA + (6R)-5,10-methylene-5,6,7,8-tetrahydrofolate + NADH + H(+) = 5-methyluridine(54) in tRNA + (6S)-5,6,7,8-tetrahydrofolate + NAD(+). It carries out the reaction uridine(54) in tRNA + (6R)-5,10-methylene-5,6,7,8-tetrahydrofolate + NADPH + H(+) = 5-methyluridine(54) in tRNA + (6S)-5,6,7,8-tetrahydrofolate + NADP(+). In terms of biological role, catalyzes the folate-dependent formation of 5-methyl-uridine at position 54 (M-5-U54) in all tRNAs. The sequence is that of Methylenetetrahydrofolate--tRNA-(uracil-5-)-methyltransferase TrmFO from Hydrogenobaculum sp. (strain Y04AAS1).